The following is a 689-amino-acid chain: Glycine--tRNA ligase beta subunit (689 aa).

The protein belongs to the class-II aminoacyl-tRNA synthetase family. In terms of assembly, tetramer of two alpha and two beta subunits.

It is found in the cytoplasm. It catalyses the reaction tRNA(Gly) + glycine + ATP = glycyl-tRNA(Gly) + AMP + diphosphate. The polypeptide is Glycine--tRNA ligase beta subunit (Enterobacter sp. (strain 638)).